The primary structure comprises 308 residues: 3'(2'),5'-bisphosphate nucleotidase 1 (308 aa).

At Ala2 the chain carries N-acetylalanine. Asp51 acts as the Proton acceptor in catalysis. The Mg(2+) site is built by Glu74, Asp117, Leu119, and Asp120. Thr122 functions as the Proton acceptor in the catalytic mechanism. A Phosphothreonine modification is found at Thr122. Residues Thr195, His198, Gly220, and Lys224 each coordinate AMP. Ser240 is subject to Phosphoserine. Position 244 is an N6-succinyllysine (Lys244). A Mg(2+)-binding site is contributed by Asp247.

Belongs to the inositol monophosphatase superfamily. It depends on Mg(2+) as a cofactor. As to expression, highly expressed in kidney, liver, pancreas and heart. Detected at lower levels in brain, placenta, lung and skeletal muscle.

It carries out the reaction adenosine 3',5'-bisphosphate + H2O = AMP + phosphate. The enzyme catalyses adenosine 2',5'-bisphosphate + H2O = AMP + phosphate. The catalysed reaction is 3'-phosphoadenylyl sulfate + H2O = adenosine 5'-phosphosulfate + phosphate. It catalyses the reaction 1D-myo-inositol 1,4-bisphosphate + H2O = 1D-myo-inositol 4-phosphate + phosphate. It carries out the reaction 1D-myo-inositol 1,3,4-trisphosphate + H2O = 1D-myo-inositol 3,4-bisphosphate + phosphate. Its activity is regulated as follows. Is very sensitive to inhibition by Li(+) (IC(50)=0.3 mM for hydrolysis of PAP; IC(50)=0.6 mM for hydrolysis of inositol-1,4-bis-phosphate). Is not affected by high Na(+) concentrations. Phosphatase that converts 3'(2')-phosphoadenosine 5'-phosphate (PAP) to AMP and inositol 1,4-bisphosphate (Ins(1,4)P2) to inositol 4-phosphate. Is also able to hydrolyze adenosine 3'-phosphate 5'-phosphosulfate (PAPS) to adenosine 5'-phosphosulfate (APS). Probably prevents the toxic accumulation of PAP, a compound which inhibits a variety of proteins, including PAPS-utilizing enzymes such as sulfotransferases, and RNA processing enzymes. Could also play a role in inositol recycling and phosphoinositide metabolism. Is not active on 3'-AMP, inositol-1-phosphate and inositol-1,4,5-triphosphate. The sequence is that of 3'(2'),5'-bisphosphate nucleotidase 1 (BPNT1) from Homo sapiens (Human).